The primary structure comprises 350 residues: Protein-glutamate methylesterase/protein-glutamine glutaminase 2 (350 aa).

The Response regulatory domain occupies arginine 3–glutamate 121. Aspartate 54 is subject to 4-aspartylphosphate. Residues isoleucine 158 to alanine 322 enclose the CheB-type methylesterase domain. Residues serine 170, histidine 197, and aspartate 290 contribute to the active site.

It belongs to the CheB family. Post-translationally, phosphorylated by CheA. Phosphorylation of the N-terminal regulatory domain activates the methylesterase activity.

It localises to the cytoplasm. The enzyme catalyses [protein]-L-glutamate 5-O-methyl ester + H2O = L-glutamyl-[protein] + methanol + H(+). It carries out the reaction L-glutaminyl-[protein] + H2O = L-glutamyl-[protein] + NH4(+). Involved in chemotaxis. Part of a chemotaxis signal transduction system that modulates chemotaxis in response to various stimuli. Catalyzes the demethylation of specific methylglutamate residues introduced into the chemoreceptors (methyl-accepting chemotaxis proteins or MCP) by CheR. Also mediates the irreversible deamidation of specific glutamine residues to glutamic acid. The polypeptide is Protein-glutamate methylesterase/protein-glutamine glutaminase 2 (Methanospirillum hungatei JF-1 (strain ATCC 27890 / DSM 864 / NBRC 100397 / JF-1)).